Reading from the N-terminus, the 490-residue chain is RNA-binding post-transcriptional regulator cip1 (490 aa).

Disordered stretches follow at residues R16 to A63, A76 to L97, and H138 to T199. Positions R34–S62 are enriched in polar residues. Phosphoserine is present on residues S37, S41, S49, S86, and S141. Composition is skewed to low complexity over residues A76–S88 and S141–K160. The segment covering A164–P192 has biased composition (polar residues). Residues T202–Q280 enclose the RRM domain. 3 positions are modified to phosphoserine: S397, S401, and S427. Residue T431 is modified to Phosphothreonine. Phosphoserine occurs at positions 435, 456, and 466. Positions P457–F490 are disordered.

As to quaternary structure, interacts with csx1. Phosphorylated by sty1.

It localises to the cytoplasm. Its function is as follows. Regulates global gene expression after oxidative stress. Interacts and stabilizes mRNAs and may regulate their transition between different cytoplasmic components after oxidative stress. The sequence is that of RNA-binding post-transcriptional regulator cip1 (cip1) from Schizosaccharomyces pombe (strain 972 / ATCC 24843) (Fission yeast).